A 296-amino-acid polypeptide reads, in one-letter code: Probable cell wall protein PGA41 (296 aa).

Positions 1–18 (MKFTIVLFTLISVTVAAA) are cleaved as a signal peptide. The segment covering 146–212 (IASSTKESSS…ITTISSDSST (67 aa)) has biased composition (low complexity). Positions 146–276 (IASSTKESSS…PNSSQTAPGA (131 aa)) are disordered. The span at 220–245 (QGGGGNSGNNGSNGDGGNDASGGGGV) shows a compositional bias: gly residues. N-linked (GlcNAc...) asparagine glycosylation is found at asparagine 229 and asparagine 268. A compositionally biased stretch (low complexity) spans 247–274 (NENEQASSPPSSQSSTNSNQPNSSQTAP). A lipid anchor (GPI-anchor amidated glycine) is attached at glycine 275. Positions 276-296 (AANYLSSVSVGTLMILVLGLI) are cleaved as a propeptide — removed in mature form.

It belongs to the IHD1 family. The GPI-anchor is attached to the protein in the endoplasmic reticulum and serves to target the protein to the cell surface. There, the glucosamine-inositol phospholipid moiety is cleaved off and the GPI-modified mannoprotein is covalently attached via its lipidless GPI glycan remnant to the 1,6-beta-glucan of the outer cell wall layer.

It is found in the secreted. It localises to the cell wall. Its subcellular location is the membrane. Probable GPI-anchored cell wall protein that may be involved in cell wall organization, hyphal growth, as well as in virulence. The protein is Probable cell wall protein PGA41 (PGA41) of Candida albicans (strain SC5314 / ATCC MYA-2876) (Yeast).